A 357-amino-acid polypeptide reads, in one-letter code: Protein-glutamate methylesterase/protein-glutamine glutaminase (357 aa).

In terms of domain architecture, Response regulatory spans 3 to 120 (RVLVVDDSAF…SIDLYKVRDM (118 aa)). The residue at position 54 (Asp-54) is a 4-aspartylphosphate. The CheB-type methylesterase domain occupies 161-355 (FRAGKQLICI…AAIMTYMKKE (195 aa)). Active-site residues include Ser-173, His-200, and Asp-296.

Belongs to the CheB family. Post-translationally, phosphorylated by CheA. Phosphorylation of the N-terminal regulatory domain activates the methylesterase activity.

The protein localises to the cytoplasm. The catalysed reaction is [protein]-L-glutamate 5-O-methyl ester + H2O = L-glutamyl-[protein] + methanol + H(+). It carries out the reaction L-glutaminyl-[protein] + H2O = L-glutamyl-[protein] + NH4(+). Functionally, involved in chemotaxis. Part of a chemotaxis signal transduction system that modulates chemotaxis in response to various stimuli. Catalyzes the demethylation of specific methylglutamate residues introduced into the chemoreceptors (methyl-accepting chemotaxis proteins or MCP) by CheR. Also mediates the irreversible deamidation of specific glutamine residues to glutamic acid. The protein is Protein-glutamate methylesterase/protein-glutamine glutaminase of Bacillus licheniformis (strain ATCC 14580 / DSM 13 / JCM 2505 / CCUG 7422 / NBRC 12200 / NCIMB 9375 / NCTC 10341 / NRRL NRS-1264 / Gibson 46).